Here is a 504-residue protein sequence, read N- to C-terminus: Anaerobic nitric oxide reductase transcription regulator NorR (504 aa).

The residue at position 57 (Asp-57) is a 4-aspartylphosphate. The Sigma-54 factor interaction domain maps to 187–416 (MIGLSPGMTQ…LEHAIHRAVV (230 aa)). Residues 215-222 (GETGTGKE) and 278-287 (ADNGTLFLDE) each bind ATP. The segment at residues 479–498 (WAACARMLETDVANLHRLAK) is a DNA-binding region (H-T-H motif).

It functions in the pathway nitrogen metabolism; nitric oxide reduction. Its function is as follows. Required for the expression of anaerobic nitric oxide (NO) reductase, acts as a transcriptional activator for at least the norVW operon. Activation also requires sigma-54. This is Anaerobic nitric oxide reductase transcription regulator NorR from Escherichia coli O81 (strain ED1a).